Here is a 137-residue protein sequence, read N- to C-terminus: Acidic phospholipase A2 1 (137 aa).

The N-terminal stretch at 1–11 (LVAVCVSLLGA) is a signal peptide. The propeptide occupies 12–19 (ANIPPQPL). 7 disulfides stabilise this stretch: cysteine 30–cysteine 89, cysteine 44–cysteine 136, cysteine 46–cysteine 62, cysteine 61–cysteine 117, cysteine 68–cysteine 110, cysteine 78–cysteine 103, and cysteine 96–cysteine 108. Ca(2+) contacts are provided by tyrosine 45, glycine 47, and glycine 49. Glycine 49 and histidine 65 together coordinate tridecanoate. The active site involves histidine 65. Aspartate 66 serves as a coordination point for Ca(2+). Residue aspartate 111 is part of the active site.

In terms of assembly, monomer. Ca(2+) is required as a cofactor. In terms of tissue distribution, expressed by the venom gland.

Its subcellular location is the secreted. It catalyses the reaction a 1,2-diacyl-sn-glycero-3-phosphocholine + H2O = a 1-acyl-sn-glycero-3-phosphocholine + a fatty acid + H(+). Snake venom phospholipase A2 (PLA2) that shows anticoagulant and neurotoxic activities. PLA2 catalyzes the calcium-dependent hydrolysis of the 2-acyl groups in 3-sn-phosphoglycerides. The polypeptide is Acidic phospholipase A2 1 (Bungarus caeruleus (Indian krait)).